The sequence spans 473 residues: Cysteine--tRNA ligase (473 aa).

A Zn(2+)-binding site is contributed by Cys-28. The short motif at 30–40 (MTVYDFCHIGH) is the 'HIGH' region element. 3 residues coordinate Zn(2+): Cys-212, His-237, and Glu-241. The short motif at 277–281 (KMSKS) is the 'KMSKS' region element. ATP is bound at residue Lys-280.

The protein belongs to the class-I aminoacyl-tRNA synthetase family. As to quaternary structure, monomer. Zn(2+) serves as cofactor.

The protein resides in the cytoplasm. It catalyses the reaction tRNA(Cys) + L-cysteine + ATP = L-cysteinyl-tRNA(Cys) + AMP + diphosphate. In Polynucleobacter necessarius subsp. necessarius (strain STIR1), this protein is Cysteine--tRNA ligase.